A 353-amino-acid polypeptide reads, in one-letter code: Probable dual-specificity RNA methyltransferase RlmN (353 aa).

Glu-104 functions as the Proton acceptor in the catalytic mechanism. The region spanning 112–341 is the Radical SAM core domain; that stretch reads DGGRKTICIS…ILNRRSPGKD (230 aa). Cysteines 119 and 346 form a disulfide. [4Fe-4S] cluster is bound by residues Cys-126, Cys-130, and Cys-133. Residues 173 to 174, Ser-205, 228 to 230, and Asn-304 contribute to the S-adenosyl-L-methionine site; these read GE and SLN. Residue Cys-346 is the S-methylcysteine intermediate of the active site.

The protein belongs to the radical SAM superfamily. RlmN family. It depends on [4Fe-4S] cluster as a cofactor.

It is found in the cytoplasm. It carries out the reaction adenosine(2503) in 23S rRNA + 2 reduced [2Fe-2S]-[ferredoxin] + 2 S-adenosyl-L-methionine = 2-methyladenosine(2503) in 23S rRNA + 5'-deoxyadenosine + L-methionine + 2 oxidized [2Fe-2S]-[ferredoxin] + S-adenosyl-L-homocysteine. It catalyses the reaction adenosine(37) in tRNA + 2 reduced [2Fe-2S]-[ferredoxin] + 2 S-adenosyl-L-methionine = 2-methyladenosine(37) in tRNA + 5'-deoxyadenosine + L-methionine + 2 oxidized [2Fe-2S]-[ferredoxin] + S-adenosyl-L-homocysteine. Functionally, specifically methylates position 2 of adenine 2503 in 23S rRNA and position 2 of adenine 37 in tRNAs. This is Probable dual-specificity RNA methyltransferase RlmN from Leptospira interrogans serogroup Icterohaemorrhagiae serovar Lai (strain 56601).